Reading from the N-terminus, the 412-residue chain is Serine hydroxymethyltransferase (412 aa).

(6S)-5,6,7,8-tetrahydrofolate-binding positions include L117 and 121 to 123 (GHL). N6-(pyridoxal phosphate)lysine is present on K226. A (6S)-5,6,7,8-tetrahydrofolate-binding site is contributed by 349–351 (SPF).

This sequence belongs to the SHMT family. As to quaternary structure, homodimer. Pyridoxal 5'-phosphate is required as a cofactor.

Its subcellular location is the cytoplasm. It carries out the reaction (6R)-5,10-methylene-5,6,7,8-tetrahydrofolate + glycine + H2O = (6S)-5,6,7,8-tetrahydrofolate + L-serine. The protein operates within one-carbon metabolism; tetrahydrofolate interconversion. It participates in amino-acid biosynthesis; glycine biosynthesis; glycine from L-serine: step 1/1. In terms of biological role, catalyzes the reversible interconversion of serine and glycine with tetrahydrofolate (THF) serving as the one-carbon carrier. This reaction serves as the major source of one-carbon groups required for the biosynthesis of purines, thymidylate, methionine, and other important biomolecules. Also exhibits THF-independent aldolase activity toward beta-hydroxyamino acids, producing glycine and aldehydes, via a retro-aldol mechanism. This is Serine hydroxymethyltransferase from Oleidesulfovibrio alaskensis (strain ATCC BAA-1058 / DSM 17464 / G20) (Desulfovibrio alaskensis).